The following is a 536-amino-acid chain: Zinc finger protein 394 (536 aa).

Positions 18–45 are disordered; sequence AVKVEEDSPGSQEPSGSGDWQNPETSRK. A Glycyl lysine isopeptide (Lys-Gly) (interchain with G-Cter in SUMO2) cross-link involves residue lysine 20. Polar residues predominate over residues 26-41; the sequence is PGSQEPSGSGDWQNPE. The SCAN box domain occupies 44 to 126; that stretch reads RKQFRQLRYQ…ALARTLQRAL (83 aa). A KRAB domain is found at 135–196; that stretch reads ATFKDVAESL…KQEMSKEAES (62 aa). Glycyl lysine isopeptide (Lys-Gly) (interchain with G-Cter in SUMO2) cross-links involve residues lysine 207 and lysine 260. C2H2-type zinc fingers lie at residues 328–350, 356–378, and 384–406; these read YKCD…QRTH, YQCQ…QRTH, and YACP…QRTH. The C2H2-type 4; atypical zinc-finger motif lies at 412-433; the sequence is CKCEECGEIFHISSLFKHQRLH. Lysine 413 participates in a covalent cross-link: Glycyl lysine isopeptide (Lys-Gly) (interchain with G-Cter in SUMO2). C2H2-type zinc fingers lie at residues 439 to 461, 467 to 489, and 495 to 517; these read HKCE…QRIH, YMCF…QRTH, and YKCF…QRIH.

Belongs to the krueppel C2H2-type zinc-finger protein family.

It is found in the nucleus. In terms of biological role, may be involved in transcriptional regulation. This is Zinc finger protein 394 (Znf394) from Rattus norvegicus (Rat).